A 155-amino-acid chain; its full sequence is 3-hydroxyacyl-[acyl-carrier-protein] dehydratase FabZ (155 aa).

Residue H57 is part of the active site.

It belongs to the thioester dehydratase family. FabZ subfamily.

It localises to the cytoplasm. The catalysed reaction is a (3R)-hydroxyacyl-[ACP] = a (2E)-enoyl-[ACP] + H2O. Involved in unsaturated fatty acids biosynthesis. Catalyzes the dehydration of short chain beta-hydroxyacyl-ACPs and long chain saturated and unsaturated beta-hydroxyacyl-ACPs. This is 3-hydroxyacyl-[acyl-carrier-protein] dehydratase FabZ from Cereibacter sphaeroides (strain ATCC 17025 / ATH 2.4.3) (Rhodobacter sphaeroides).